We begin with the raw amino-acid sequence, 762 residues long: Cellulose synthase-like protein H2 (762 aa).

A compositionally biased stretch (low complexity) spans 1 to 15; that stretch reads MAVVAAAAATGSTTR. The disordered stretch occupies residues 1–39; it reads MAVVAAAAATGSTTRSGGGGGEGTRSGRKKPPPPPLQER. The next 2 helical transmembrane spans lie at 47–67 and 81–101; these read AWAW…LLAL and GVWR…ALNV. Residues D180 and D470 contribute to the active site. Transmembrane regions (helical) follow at residues 541–561, 582–602, 619–639, 673–693, 708–728, and 739–759; these read LAYL…CYGL, FSVP…EYMA, IISV…SLGL, LPVF…VTVG, APGI…FPFV, and GIPW…VTFC.

This sequence belongs to the glycosyltransferase 2 family. Plant cellulose synthase-like H subfamily.

The protein localises to the golgi apparatus membrane. In terms of biological role, thought to be a Golgi-localized beta-glycan synthase that polymerize the backbones of noncellulosic polysaccharides (hemicelluloses) of plant cell wall. In Oryza sativa subsp. japonica (Rice), this protein is Cellulose synthase-like protein H2 (CSLH2).